Reading from the N-terminus, the 293-residue chain is MAWVQIRLNSTDKQAEQISDFLEEIGAVSVTFMDSQDTPIFEPLPGETRLWGNTDVVGLFDAETDMKAIVEALIASRLVEADFAHKIEQIEDKDWEREWMDNFHPMQFGKRLWICPSWREVPDPNAVNVMLDPGLAFGTGTHPTTALCLQWLDSLDLTGKTVIDFGCGSGILAIAALKLGAKQAIGIDIDPQAILASGNNAEANGVADRLQLFLAKDQPQDLQADVVVANILAGPLKELAPNIITLVKPQGDLGLSGILATQAESVCEAYAPDFNLDPVVEKEEWCRITGVKK.

Residues threonine 145, glycine 166, aspartate 188, and asparagine 230 each contribute to the S-adenosyl-L-methionine site.

It belongs to the methyltransferase superfamily. PrmA family.

Its subcellular location is the cytoplasm. The catalysed reaction is L-lysyl-[protein] + 3 S-adenosyl-L-methionine = N(6),N(6),N(6)-trimethyl-L-lysyl-[protein] + 3 S-adenosyl-L-homocysteine + 3 H(+). Its function is as follows. Methylates ribosomal protein L11. In Actinobacillus pleuropneumoniae serotype 5b (strain L20), this protein is Ribosomal protein L11 methyltransferase.